The following is a 79-amino-acid chain: MSEILPYSEDKMGRFGADPEGSDLSFSCRLQDTNSFFAGNQAKRPPKLGQIGRAKRVVIEDDRIDDVLKGMGEKPPSGV.

The interval 1-21 (MSEILPYSEDKMGRFGADPEG) is disordered. The interval 43–69 (KRPPKLGQIGRAKRVVIEDDRIDDVLK) is inhibitory domain.

The protein belongs to the CAMK2N family. As to quaternary structure, interacts with CAMK2A and CAMK2B in the presence of Ca(2+)/calmodulin or after autophosphorylation.

The protein resides in the nucleus. The protein localises to the cytoplasm. It is found in the cytosol. Its subcellular location is the synapse. Its function is as follows. Potent and specific cellular inhibitor of CaM-kinase II (CAMK2). Traps Ca(2+)/calmodulin on CAMK2. The polypeptide is Calcium/calmodulin-dependent protein kinase II inhibitor 2 (CAMK2N2) (Bos taurus (Bovine)).